The sequence spans 361 residues: Probable dual-specificity RNA methyltransferase RlmN (361 aa).

E91 serves as the catalytic Proton acceptor. Positions 97–329 (QHYGLSVCVT…KKKGVNCVVR (233 aa)) constitute a Radical SAM core domain. Cysteines 104 and 340 form a disulfide. [4Fe-4S] cluster-binding residues include C111, C115, and C118. Residues 163-164 (GE), S195, 218-220 (SLH), and N296 each bind S-adenosyl-L-methionine. C340 (S-methylcysteine intermediate) is an active-site residue.

Belongs to the radical SAM superfamily. RlmN family. The cofactor is [4Fe-4S] cluster.

The protein localises to the cytoplasm. It catalyses the reaction adenosine(2503) in 23S rRNA + 2 reduced [2Fe-2S]-[ferredoxin] + 2 S-adenosyl-L-methionine = 2-methyladenosine(2503) in 23S rRNA + 5'-deoxyadenosine + L-methionine + 2 oxidized [2Fe-2S]-[ferredoxin] + S-adenosyl-L-homocysteine. The enzyme catalyses adenosine(37) in tRNA + 2 reduced [2Fe-2S]-[ferredoxin] + 2 S-adenosyl-L-methionine = 2-methyladenosine(37) in tRNA + 5'-deoxyadenosine + L-methionine + 2 oxidized [2Fe-2S]-[ferredoxin] + S-adenosyl-L-homocysteine. Its function is as follows. Specifically methylates position 2 of adenine 2503 in 23S rRNA and position 2 of adenine 37 in tRNAs. The chain is Probable dual-specificity RNA methyltransferase RlmN from Streptococcus pneumoniae serotype 19F (strain G54).